Here is a 464-residue protein sequence, read N- to C-terminus: UPF0210 protein MA_1691 (464 aa).

The protein belongs to the UPF0210 family.

The protein is UPF0210 protein MA_1691 of Methanosarcina acetivorans (strain ATCC 35395 / DSM 2834 / JCM 12185 / C2A).